A 117-amino-acid chain; its full sequence is Non-specific lipid-transfer protein 1 (117 aa).

Positions 1–26 are cleaved as a signal peptide; sequence MAYSAMTKLALVVALCMVVSVPIAQA. Disulfide bonds link cysteine 29/cysteine 76, cysteine 39/cysteine 53, cysteine 54/cysteine 99, and cysteine 74/cysteine 113.

It belongs to the plant LTP family.

Functionally, plant non-specific lipid-transfer proteins transfer phospholipids as well as galactolipids across membranes. May play a role in wax or cutin deposition in the cell walls of expanding epidermal cells and certain secretory tissues. This is Non-specific lipid-transfer protein 1 from Prunus dulcis (Almond).